The following is a 244-amino-acid chain: 5-oxoprolinase subunit A (244 aa).

Belongs to the LamB/PxpA family. As to quaternary structure, forms a complex composed of PxpA, PxpB and PxpC.

The enzyme catalyses 5-oxo-L-proline + ATP + 2 H2O = L-glutamate + ADP + phosphate + H(+). In terms of biological role, catalyzes the cleavage of 5-oxoproline to form L-glutamate coupled to the hydrolysis of ATP to ADP and inorganic phosphate. The polypeptide is 5-oxoprolinase subunit A (Salmonella paratyphi A (strain ATCC 9150 / SARB42)).